The chain runs to 595 residues: Torsin-1A-interacting protein 1 (595 aa).

A disordered region spans residues 1–221 (MAGERWQAEG…GNTKTNEREA (221 aa)). Topologically, residues 1–351 (MAGERWQAEG…NEPSVKIKWW (351 aa)) are nuclear. Over residues 24-38 (PIREGRRRLDPRNGD) the composition is skewed to basic and acidic residues. At S60 the chain carries Phosphoserine. 2 stretches are compositionally biased toward basic and acidic residues: residues 70–101 (FEPR…EVRE) and 115–132 (RAQE…RLEQ). Residues 133–143 (HSQQPQLSPAT) show a composition bias toward polar residues. Phosphoserine occurs at positions 134, 140, 151, 153, 154, and 155. The segment covering 204–215 (LDSTYQTNGNTK) has biased composition (polar residues). At T235 the chain carries Phosphothreonine. Phosphoserine occurs at positions 241, 244, and 255. 2 disordered regions span residues 250 to 286 (ARSS…PAHE) and 319 to 340 (IQKS…AIHH). Over residues 251–262 (RSSDSLESRDEA) the composition is skewed to basic and acidic residues. The segment covering 319 to 335 (IQKSNFGNQSPSTSRPQ) has biased composition (polar residues). A Glycyl lysine isopeptide (Lys-Gly) (interchain with G-Cter in SUMO2) cross-link involves residue K321. The residue at position 328 (S328) is a Phosphoserine. The chain crosses the membrane as a helical span at residues 352–372 (LLGLVAILAVGLFWFFHTPAV). Positions 368–595 (HTPAVETTAV…ENTLKAGSCL (228 aa)) are interaction with TOR1A. Positions 373–400 (ETTAVQEFQNQMKQLQSKYQSQNEKLWK) form a coiled coil. The Perinuclear space segment spans residues 373–595 (ETTAVQEFQN…ENTLKAGSCL (223 aa)). A glycan (N-linked (GlcNAc...) asparagine) is linked at N411.

This sequence belongs to the TOR1AIP family. In terms of assembly, interacts with ATP1B4. Interacts with TOR1A (ATP-bound). Interacts with TOR1B, TOR2A and TOR3A. Interacts with VIM. As to expression, expressed in the spinal cord and liver (at protein level).

The protein resides in the nucleus inner membrane. Functionally, required for nuclear membrane integrity. Induces TOR1A and TOR1B ATPase activity and is required for their location on the nuclear membrane. Binds to A- and B-type lamins. Possible role in membrane attachment and assembly of the nuclear lamina. The polypeptide is Torsin-1A-interacting protein 1 (Tor1aip1) (Mus musculus (Mouse)).